Here is a 221-residue protein sequence, read N- to C-terminus: Small ribosomal subunit protein uS5 (221 aa).

The tract at residues 1-40 is disordered; the sequence is MMAQRNSGAPDNAGGSNDGREGGRGRRDNRDDRRGGRDNA. The segment covering 18–40 has biased composition (basic and acidic residues); it reads DGREGGRGRRDNRDDRRGGRDNA. One can recognise an S5 DRBM domain in the interval 45–108; that stretch reads YLERVVTINR…DEARKNFFRV (64 aa).

The protein belongs to the universal ribosomal protein uS5 family. In terms of assembly, part of the 30S ribosomal subunit. Contacts proteins S4 and S8.

With S4 and S12 plays an important role in translational accuracy. Functionally, located at the back of the 30S subunit body where it stabilizes the conformation of the head with respect to the body. This Mycobacteroides abscessus (strain ATCC 19977 / DSM 44196 / CCUG 20993 / CIP 104536 / JCM 13569 / NCTC 13031 / TMC 1543 / L948) (Mycobacterium abscessus) protein is Small ribosomal subunit protein uS5.